Here is a 2222-residue protein sequence, read N- to C-terminus: MTKNIASDNVPLSRFGVLVAQLESIVASASQKNPDPLLCFEILSDLISAIDEEPKESLLVTQRKCEDALYSLVTLGARRPVRHLASVAMAKIISNGDSISIYSRASSLQGFLSDGKRSDPQRVAGAAQCLGELYRHFGKKITSGLFETTSIVTKLVKFNEDFVRQEAFILLHNALEGCGGTAAATAYSEAYRLITRFSTLDKSFVVRIAAARCLKAFSNIGGPGLGTSEFDTLASYCVKGIEDSESSVRDAFAEALGSLLALGMHPEAHVQPRGKGPFPPAKKLEGGLQRHLILPFTKAVGSRAKNTRFGLALSWVFFLQAIRIRYLDSDSELQDYSLPIMDMLRGDSSIDAHALACVLYILRVGVIDQMMEPSQRSFSVFLGKQLQSSNASPSMKIVALRALSYTLKTLGEVPHEFKEFFDDTVGAALSHFLDLVRVEAALTLRALAEVDPTCVGGLTSFAVTTLNALRESLSFEKGDKLKTDLASLHGQAATLAALVSISPGLSLGYPARLPRSVLEVSKKMLTESRRNVTVASSEKEAGWLLLSSLLNSMPKEEFGDQDFDILILWTDVFAGNPEHLIKQQAELKSMLSVWSAAIDALTAFVRRFVSCNDGILLQPVLANLRSALSCVSTMANKRFSDVKTLVDILIIRILIAYQSIPDPLAYKSEHQQIIQLCTTPYRDPSGFEESSCLKSLLDKRDAWLGPWIPGRDWFEDELRYFQGGEDGLAPSVWESKVSSFPLPETVKKTLVNQMVLCFGIMFASQDSQGMLSLLSVIQQCLKAGKKQQWRTASLTNICAGLLAGLKALHALRPQQLTTEVLSSGQAIFQNILTEGDICASQRRAACEGLGLLARLGNDIFTARMTRVLLGDLSGVTDPNYGGSIALALGCIHHSAGGMALSSLVPATVNSVSSLTKTSVLGLKIWALHGLLLTIEAAGLSFVSHVQAALGLALDILLTEESGWIDLSQGIGRLINAIVAVLGPELSPGSILFSRCKSVIAEISSWQEIPTLLESVCFTQQLILFAPQAVSVHIHVKNLLMTLASRQPIIRRLSVSTLRHLVEKDPVSVIDEQIEDNLFQMLDEETDSEIGNLIRSTLIRLLYATCPSRPSRWMLICRNMALAASAGRSAETSIAENDPAYTRENLGDDDEDMVSSSSGKSIRANPDKDKTLRYRTRVFAAECLSLLPEAVGNDAAHFDILLARNLASNRQSSGDWLVLQLQELISLAYQISTIQFENMRPIGVGLLSTILEKFKLVADPELPGHLLLEQYQAQLLSAVRTALDANSGPVLLEAGLQLATKIMTSGIIRSDQVAVKRIFSLLSRPLNDFNELYYPSFAEWVTSKIKIRLLAAHASLKCYIFTFLRKHHGEVPVEFEALLPMFSKSSDLLGRYWIQVLKGYSYICLCQNLKKSQCSFLDEILPHTVSRRLQPCLEEAWPVILQALVLDAIPVNHSVEEFSDRSLISTHRMVTLEAEDFQFLWGFAVLVLFQGMHPASSMQVIPFSSAKIKSSGDSSINESSFQGLKLYEIALPVFQSLSAGRFFSSGFLSIDLCQELLQVLSYSFHMDSSWDILAVSVVQQISQNCPKDFLESEEFAYSTIELCLGYLFKILHRHNEISPDDGIWDNMLSPLFISIKTLVKRFELKHRLNSAPLAFLLSGYKCIRQVPTDAYLPKALEIVKSTNDLLLELTRASSQKPYTDGTNFAADSGFHLRAIFGACLHMVGDLTRDCINGIQLVDSKRSGLRKLLQLKLVFCLEQLFSLAKLAYEFDCPVDETNTNSICIVMLKSCQISIAAVVKDSNVQVQATVLQVLKSLVQRYNNPEEKSFVILFVGELIGDIVSLMQRALLKPVNTESVVIAGECLRFIMLLQTHSITDELQKGFMSLFLEVVLVVFSKTSDGVSQEVLELRNVAVRLVSHLAQLPSSAVHFKDVLLSLPVTHRQQLQDIIRASVSKDSALAKPKSLVPAMDIKLPAPVVATPEKVTSTANMVKEEALSTMPTSFNQVSTVESGTDEEEEEEEDDDDDDWDTFQSFPASTNLEGSESKTESVAEEEPDLPGRSSIQDDESNAEETDDQHLASDHATDITREDSNDKSKEVVEEETVEPCFTTREDSVDKSKEVEEETVKPCLIEDALTSQNDKTSSGDHPVEINEQSVESKNLESENIGTDIKLASTEVESPALDDLEPQQIQKSPEDESSKEHVGADVIVTEETIAENKSDVDYI.

10 HEAT repeats span residues L37–L75, S228–H265, S331–D368, P510–E540, A541–E578, C611–I648, Q768–A807, M898–A936, Q968–I1008, and V1029–V1066. The segment at I1133 to P1165 is disordered. HEAT repeat units follow at residues M1238–Q1269, Y1270–I1306, V1312–S1354, V1372–K1410, E1434–E1474, D1550–K1586, V1783–N1820, G1836–T1874, G1880–H1917, and A1966–T2006. Residues E1992–A2203 form a disordered region. Over residues T1996–S2009 the composition is skewed to polar residues. Positions G2010 to D2027 are enriched in acidic residues. Residues T2028–G2040 are compositionally biased toward polar residues. A compositionally biased stretch (acidic residues) spans Q2062–D2072. 2 stretches are compositionally biased toward basic and acidic residues: residues D2073–V2096 and T2108–V2124. A compositionally biased stretch (polar residues) spans N2150–I2164. Residues S2191 to G2202 are compositionally biased toward basic and acidic residues.

The protein belongs to the HEATR5 family.

Functionally, may regulate multiple metabolic, hormonal and stress-related pathways. Required for carbohydrate metabolism and homoeostasis. May also monitor ethylene biosynthesis and senescence. This Arabidopsis thaliana (Mouse-ear cress) protein is Protein SWEETIE.